A 315-amino-acid polypeptide reads, in one-letter code: Homoserine kinase (315 aa).

97–107 (PPARGLGSSAT) is a binding site for ATP.

The protein belongs to the GHMP kinase family. Homoserine kinase subfamily.

It localises to the cytoplasm. The catalysed reaction is L-homoserine + ATP = O-phospho-L-homoserine + ADP + H(+). It functions in the pathway amino-acid biosynthesis; L-threonine biosynthesis; L-threonine from L-aspartate: step 4/5. Catalyzes the ATP-dependent phosphorylation of L-homoserine to L-homoserine phosphate. This chain is Homoserine kinase, found in Prochlorococcus marinus (strain MIT 9312).